The sequence spans 1713 residues: Serine/threonine-protein kinase MRCK beta (1713 aa).

Residues phenylalanine 76–phenylalanine 342 enclose the Protein kinase domain. ATP contacts are provided by residues isoleucine 82–valine 90 and lysine 105. Aspartate 200 acts as the Proton acceptor in catalysis. Phosphoserine; by autocatalysis is present on residues serine 221 and serine 233. Position 239 is a phosphothreonine; by autocatalysis (threonine 239). The AGC-kinase C-terminal domain occupies glutamate 343 to glycine 413. The residue at position 423 (threonine 423) is a Phosphothreonine. The stretch at leucine 434–histidine 649 forms a coiled coil. Residues leucine 461–lysine 485 are disordered. The span at glutamate 463–serine 481 shows a compositional bias: polar residues. Arginine 671 is subject to Omega-N-methylarginine. Coiled coils occupy residues glutamine 681–glutamate 815 and alanine 882–aspartate 939. At serine 927 the chain carries Phosphoserine. Tyrosine 954 is subject to Phosphotyrosine. Polar residues-rich tracts occupy residues alanine 971–glutamate 994 and arginine 1001–threonine 1014. The disordered stretch occupies residues alanine 971–threonine 1014. The segment at alanine 1026–cysteine 1076 adopts a Phorbol-ester/DAG-type zinc-finger fold. The 120-residue stretch at glycine 1096–alanine 1215 folds into the PH domain. One can recognise a CNH domain in the interval isoleucine 1241 to asparagine 1515. Residues isoleucine 1585 to glycine 1598 enclose the CRIB domain. Residues proline 1615 to alanine 1713 form a disordered region. Residues aspartate 1666–lysine 1677 show a composition bias toward basic and acidic residues. A phosphoserine mark is found at serine 1682, serine 1684, serine 1688, serine 1692, and serine 1695.

The protein belongs to the protein kinase superfamily. AGC Ser/Thr protein kinase family. DMPK subfamily. As to quaternary structure, homodimer and homotetramer via the coiled coil regions. Interacts tightly with GTP-bound but not GDP-bound CDC42. Interacts with TJP1; this interaction requires the presence of catalytically active CDC42. Forms a tripartite complex with MYO18A and LURAP1 with the latter acting as an adapter connecting CDC42BPB and MYO18A. LURAP1 binding results in activation of CDC42BPB by abolition of its negative autoregulation. Interacts with STRIP1, STRN3 and SIKE1. Interacts with CPNE4 (via VWFA domain). Interacts with LURAP1. Interacts (via AGC-kinase C-terminal domain) with FAM89B/LRAP25 (via LRR repeat). Forms a tripartite complex with FAM89B/LRAP25 and LIMK1. Mg(2+) serves as cofactor. Post-translationally, proteolytically cleaved by caspases upon apoptosis induction. In terms of tissue distribution, expressed in all tissues examined with highest levels in lung and kidney.

The protein localises to the cytoplasm. The protein resides in the cell membrane. It localises to the cell junction. It is found in the cell projection. Its subcellular location is the lamellipodium. The catalysed reaction is L-seryl-[protein] + ATP = O-phospho-L-seryl-[protein] + ADP + H(+). It carries out the reaction L-threonyl-[protein] + ATP = O-phospho-L-threonyl-[protein] + ADP + H(+). Its activity is regulated as follows. Maintained in an inactive, closed conformation by an interaction between the kinase domain and the negative autoregulatory C-terminal coiled-coil region. Agonist binding to the phorbol ester binding site disrupts this, releasing the kinase domain to allow N-terminus-mediated dimerization and kinase activation by transautophosphorylation. Inhibited by chelerythrine chloride. Functionally, serine/threonine-protein kinase which is an important downstream effector of CDC42 and plays a role in the regulation of cytoskeleton reorganization and cell migration. Regulates actin cytoskeletal reorganization via phosphorylation of PPP1R12C and MYL9/MLC2. In concert with MYO18A and LURAP1, is involved in modulating lamellar actomyosin retrograde flow that is crucial to cell protrusion and migration. Phosphorylates PPP1R12A. In concert with FAM89B/LRAP25 mediates the targeting of LIMK1 to the lamellipodium resulting in its activation and subsequent phosphorylation of CFL1 which is important for lamellipodial F-actin regulation. The chain is Serine/threonine-protein kinase MRCK beta from Rattus norvegicus (Rat).